Consider the following 120-residue polypeptide: MSYRKLGRTSSQRKAMLRDLTTDLIINERIETTETRAKELRSVVEKMITLGKRGDLHARRQAAAYIRNEVANEENNQDALQKLFSDIATRYEERQGGYTRIMKLGPRRGDGAPMAIIELV.

Belongs to the bacterial ribosomal protein bL17 family. As to quaternary structure, part of the 50S ribosomal subunit. Contacts protein L32.

The polypeptide is Large ribosomal subunit protein bL17 (Bacillus velezensis (strain DSM 23117 / BGSC 10A6 / LMG 26770 / FZB42) (Bacillus amyloliquefaciens subsp. plantarum)).